A 139-amino-acid polypeptide reads, in one-letter code: Small ribosomal subunit protein uS9 (139 aa).

The protein belongs to the universal ribosomal protein uS9 family.

In Coxiella burnetii (strain CbuG_Q212) (Coxiella burnetii (strain Q212)), this protein is Small ribosomal subunit protein uS9.